A 101-amino-acid polypeptide reads, in one-letter code: DNA-binding protein TubR (101 aa).

In terms of assembly, homodimer. Dimers bind to DNA, forming a protein-bound filament which may form a helix around the TubZ filament.

A DNA-binding protein that is part of the type III plasmid partition system used to ensure correct segregation of the pBM400 plasmid. Binds the plasmid origin of replication, probably cooperatively, forming a ring or short helix with external DNA. Its effect on RNA expression has not been shown. In Priestia megaterium (strain ATCC 12872 / QMB1551) (Bacillus megaterium), this protein is DNA-binding protein TubR.